We begin with the raw amino-acid sequence, 302 residues long: MPINIPVHLPAKQILESENIFVMDETRAFKQDIRPLNIVILNLMPKKIQTETQLLRMLGNSPLQVYFTFLIPSTHTPKNTSREHLDEFYTTFESIRHKKFDGMIITGAPIEHLAFEEVSYWKELQEILDWSKTNVTSTLHICWGAQAGLYHHYGIEKIKLAEKKFGVFEHLVKEKKERLVRGFDELYYVPHSRHTDINTEQLKNTPNLKVLSVSEEAGVCLIVSDDDKQVFLTGHPEYDTDTLKQEYERDLLKDDTVKKPVHYFIEDGDALVPVNRWKAHATLLFMNWLNYYVYQETPYVWE.

C142 serves as the catalytic Acyl-thioester intermediate. K163 and S192 together coordinate substrate. H235 (proton acceptor) is an active-site residue. E237 is an active-site residue. R249 is a substrate binding site.

The protein belongs to the MetA family.

It is found in the cytoplasm. It carries out the reaction L-homoserine + acetyl-CoA = O-acetyl-L-homoserine + CoA. The protein operates within amino-acid biosynthesis; L-methionine biosynthesis via de novo pathway; O-acetyl-L-homoserine from L-homoserine: step 1/1. Its function is as follows. Transfers an acetyl group from acetyl-CoA to L-homoserine, forming acetyl-L-homoserine. This chain is Homoserine O-acetyltransferase, found in Bacillus pumilus (strain SAFR-032).